Consider the following 407-residue polypeptide: Phosphoglycerate kinase (407 aa).

Substrate is bound by residues 24–26 (DFN), Arg-40, 63–66 (HLGR), Arg-121, and Arg-154. ATP-binding positions include Lys-205, Glu-337, and 363-366 (GGDS).

The protein belongs to the phosphoglycerate kinase family. Monomer.

The protein localises to the cytoplasm. It catalyses the reaction (2R)-3-phosphoglycerate + ATP = (2R)-3-phospho-glyceroyl phosphate + ADP. The protein operates within carbohydrate degradation; glycolysis; pyruvate from D-glyceraldehyde 3-phosphate: step 2/5. In Gloeobacter violaceus (strain ATCC 29082 / PCC 7421), this protein is Phosphoglycerate kinase.